The primary structure comprises 211 residues: High mobility group protein B1-like 1 (211 aa).

7 positions are modified to N6-acetyllysine: Lys-3, Lys-7, Lys-8, Lys-12, Lys-28, Lys-29, and Lys-30. Residues 9–79 constitute a DNA-binding region (HMG box 1); the sequence is PRGKMSSYAF…HYERQMKTYI (71 aa). The tract at residues 71 to 96 is disordered; that stretch reads YERQMKTYIPPKGETKKKFKDPNAPK. The span at 83 to 94 shows a compositional bias: basic and acidic residues; the sequence is GETKKKFKDPNA. The segment at residues 95-163 is a DNA-binding region (HMG box 2); the sequence is PKRPPSAFFL…KYEKDIAAYQ (69 aa). Residues Lys-127, Lys-128, Lys-172, Lys-173, Lys-177, Lys-180, Lys-182, Lys-183, Lys-184, and Lys-185 each carry the N6-acetyllysine modification. Residues 161–211 are disordered; sequence AYQAKGKPEAAKKGVVKAEKSKKKKEEEEDEEDEEDEEEEDEEDEEDDDDE. Residues 166–179 are compositionally biased toward basic and acidic residues; it reads GKPEAAKKGVVKAE. Residues 187–211 are compositionally biased toward acidic residues; it reads EEEDEEDEEDEEEEDEEDEEDDDDE.

Belongs to the HMGB family.

The protein resides in the nucleus. It localises to the chromosome. Functionally, binds preferentially single-stranded DNA and unwinds double-stranded DNA. The sequence is that of High mobility group protein B1-like 1 (HMGB1P1) from Homo sapiens (Human).